The primary structure comprises 274 residues: Formamidopyrimidine-DNA glycosylase (274 aa).

Residue Pro-2 is the Schiff-base intermediate with DNA of the active site. Glu-3 serves as the catalytic Proton donor. Catalysis depends on Lys-57, which acts as the Proton donor; for beta-elimination activity. DNA-binding residues include His-92, Arg-111, and Lys-152. An FPG-type zinc finger spans residues 237 to 271 (QVYGRKGEECNDCGSIIEAKVIGQRNSFYCPKCQR). The active-site Proton donor; for delta-elimination activity is the Arg-261.

The protein belongs to the FPG family. Monomer. Zn(2+) is required as a cofactor.

It catalyses the reaction Hydrolysis of DNA containing ring-opened 7-methylguanine residues, releasing 2,6-diamino-4-hydroxy-5-(N-methyl)formamidopyrimidine.. It carries out the reaction 2'-deoxyribonucleotide-(2'-deoxyribose 5'-phosphate)-2'-deoxyribonucleotide-DNA = a 3'-end 2'-deoxyribonucleotide-(2,3-dehydro-2,3-deoxyribose 5'-phosphate)-DNA + a 5'-end 5'-phospho-2'-deoxyribonucleoside-DNA + H(+). Involved in base excision repair of DNA damaged by oxidation or by mutagenic agents. Acts as a DNA glycosylase that recognizes and removes damaged bases. Has a preference for oxidized purines, such as 7,8-dihydro-8-oxoguanine (8-oxoG). Has AP (apurinic/apyrimidinic) lyase activity and introduces nicks in the DNA strand. Cleaves the DNA backbone by beta-delta elimination to generate a single-strand break at the site of the removed base with both 3'- and 5'-phosphates. This chain is Formamidopyrimidine-DNA glycosylase, found in Glaesserella parasuis serovar 5 (strain SH0165) (Haemophilus parasuis).